Here is an 85-residue protein sequence, read N- to C-terminus: Sec-independent protein translocase protein TatA (85 aa).

The chain crosses the membrane as a helical span at residues 1–21 (MGSFSIWHWLIVLLIIMMVFG). Positions 39 to 51 (FKEGMREGSEDKP) are enriched in basic and acidic residues. The tract at residues 39–85 (FKEGMREGSEDKPAGSQQGQQAAGQPPRELHDSTTIDVEARDKSKQG) is disordered. Low complexity predominate over residues 52-65 (AGSQQGQQAAGQPP). Residues 66-85 (RELHDSTTIDVEARDKSKQG) show a composition bias toward basic and acidic residues.

Belongs to the TatA/E family. As to quaternary structure, the Tat system comprises two distinct complexes: a TatABC complex, containing multiple copies of TatA, TatB and TatC subunits, and a separate TatA complex, containing only TatA subunits. Substrates initially bind to the TatABC complex, which probably triggers association of the separate TatA complex to form the active translocon.

The protein resides in the cell inner membrane. In terms of biological role, part of the twin-arginine translocation (Tat) system that transports large folded proteins containing a characteristic twin-arginine motif in their signal peptide across membranes. TatA could form the protein-conducting channel of the Tat system. In Ralstonia nicotianae (strain ATCC BAA-1114 / GMI1000) (Ralstonia solanacearum), this protein is Sec-independent protein translocase protein TatA.